The chain runs to 279 residues: Thymidylate synthase (279 aa).

DUMP is bound at residue 133–134 (RR). The Nucleophile role is filled by Cys154. Residues 178–181 (RSND), Asn189, and 219–221 (HIY) each bind dUMP. Asp181 provides a ligand contact to (6R)-5,10-methylene-5,6,7,8-tetrahydrofolate. Position 278 (Ala278) interacts with (6R)-5,10-methylene-5,6,7,8-tetrahydrofolate.

It belongs to the thymidylate synthase family. Bacterial-type ThyA subfamily. As to quaternary structure, homodimer.

Its subcellular location is the cytoplasm. It catalyses the reaction dUMP + (6R)-5,10-methylene-5,6,7,8-tetrahydrofolate = 7,8-dihydrofolate + dTMP. Its pathway is pyrimidine metabolism; dTTP biosynthesis. In terms of biological role, catalyzes the reductive methylation of 2'-deoxyuridine-5'-monophosphate (dUMP) to 2'-deoxythymidine-5'-monophosphate (dTMP) while utilizing 5,10-methylenetetrahydrofolate (mTHF) as the methyl donor and reductant in the reaction, yielding dihydrofolate (DHF) as a by-product. This enzymatic reaction provides an intracellular de novo source of dTMP, an essential precursor for DNA biosynthesis. The protein is Thymidylate synthase of Streptococcus sanguinis (strain SK36).